The sequence spans 142 residues: MLTNKEIRELLPHRYPFLLVDKVIELEPGKKVVAVKNVSANEPFFQGHFPEYPIMPGVLIVEALAQAAGIAVAVLEDNKGKLGVFAGIEAMKFKNQVMPGDVLTLEAEILVSKLGVTKAKVKASVDGKVAAEGEIKFAMTKA.

H48 is an active-site residue.

Belongs to the thioester dehydratase family. FabZ subfamily.

The protein resides in the cytoplasm. The enzyme catalyses a (3R)-hydroxyacyl-[ACP] = a (2E)-enoyl-[ACP] + H2O. In terms of biological role, involved in unsaturated fatty acids biosynthesis. Catalyzes the dehydration of short chain beta-hydroxyacyl-ACPs and long chain saturated and unsaturated beta-hydroxyacyl-ACPs. The chain is 3-hydroxyacyl-[acyl-carrier-protein] dehydratase FabZ from Ruminiclostridium cellulolyticum (strain ATCC 35319 / DSM 5812 / JCM 6584 / H10) (Clostridium cellulolyticum).